Here is a 346-residue protein sequence, read N- to C-terminus: Holliday junction branch migration complex subunit RuvB (346 aa).

The tract at residues 1–182 is large ATPase domain (RuvB-L); the sequence is MSERLVTSNE…LGVLCSMEYY (182 aa). Residues leucine 21, arginine 22, glycine 63, lysine 66, threonine 67, threonine 68, 129–131, arginine 172, tyrosine 182, and arginine 219 each bind ATP; that span reads EDY. Threonine 67 contacts Mg(2+). A small ATPAse domain (RuvB-S) region spans residues 183–253; sequence TDEQLKEIII…AAKKSLEILE (71 aa). The interval 256 to 346 is head domain (RuvB-H); that stretch reads GEGFDRIDNK…DSKQCTLFEK (91 aa). Positions 311 and 316 each coordinate DNA.

Belongs to the RuvB family. Homohexamer. Forms an RuvA(8)-RuvB(12)-Holliday junction (HJ) complex. HJ DNA is sandwiched between 2 RuvA tetramers; dsDNA enters through RuvA and exits via RuvB. An RuvB hexamer assembles on each DNA strand where it exits the tetramer. Each RuvB hexamer is contacted by two RuvA subunits (via domain III) on 2 adjacent RuvB subunits; this complex drives branch migration. In the full resolvosome a probable DNA-RuvA(4)-RuvB(12)-RuvC(2) complex forms which resolves the HJ.

The protein resides in the cytoplasm. The enzyme catalyses ATP + H2O = ADP + phosphate + H(+). In terms of biological role, the RuvA-RuvB-RuvC complex processes Holliday junction (HJ) DNA during genetic recombination and DNA repair, while the RuvA-RuvB complex plays an important role in the rescue of blocked DNA replication forks via replication fork reversal (RFR). RuvA specifically binds to HJ cruciform DNA, conferring on it an open structure. The RuvB hexamer acts as an ATP-dependent pump, pulling dsDNA into and through the RuvAB complex. RuvB forms 2 homohexamers on either side of HJ DNA bound by 1 or 2 RuvA tetramers; 4 subunits per hexamer contact DNA at a time. Coordinated motions by a converter formed by DNA-disengaged RuvB subunits stimulates ATP hydrolysis and nucleotide exchange. Immobilization of the converter enables RuvB to convert the ATP-contained energy into a lever motion, pulling 2 nucleotides of DNA out of the RuvA tetramer per ATP hydrolyzed, thus driving DNA branch migration. The RuvB motors rotate together with the DNA substrate, which together with the progressing nucleotide cycle form the mechanistic basis for DNA recombination by continuous HJ branch migration. Branch migration allows RuvC to scan DNA until it finds its consensus sequence, where it cleaves and resolves cruciform DNA. The polypeptide is Holliday junction branch migration complex subunit RuvB (Clostridium perfringens (strain 13 / Type A)).